Here is a 206-residue protein sequence, read N- to C-terminus: Large ribosomal subunit protein mL62 (206 aa).

The N-terminal 29 residues, 1–29, are a transit peptide targeting the mitochondrion; it reads MATAWGLRWGLSRTGTLLLAPPARCARRA. Q90 carries the N5-methylglutamine modification.

Belongs to the prokaryotic/mitochondrial release factor family. Mitochondrion-specific ribosomal protein mL62 subfamily. Component of the mitochondrial ribosome large subunit (39S) which comprises a 16S rRNA and about 50 distinct proteins. Post-translationally, methylation of glutamine in the GGQ triplet by HEMK1.

The protein resides in the mitochondrion. The enzyme catalyses an N-acyl-L-alpha-aminoacyl-tRNA + H2O = an N-acyl-L-amino acid + a tRNA + H(+). Functionally, essential peptidyl-tRNA hydrolase component of the mitochondrial large ribosomal subunit. Acts as a codon-independent translation release factor that has lost all stop codon specificity and directs the termination of translation in mitochondrion, possibly in case of abortive elongation. May be involved in the hydrolysis of peptidyl-tRNAs that have been prematurely terminated and thus in the recycling of stalled mitochondrial ribosomes. In Mus musculus (Mouse), this protein is Large ribosomal subunit protein mL62.